A 132-amino-acid chain; its full sequence is Large ribosomal subunit protein uL14 (132 aa).

It belongs to the universal ribosomal protein uL14 family. As to quaternary structure, part of the 50S ribosomal subunit. Forms a cluster with proteins L3 and L24e, part of which may contact the 16S rRNA in 2 intersubunit bridges.

Binds to 23S rRNA. Forms part of two intersubunit bridges in the 70S ribosome. This Methanoregula boonei (strain DSM 21154 / JCM 14090 / 6A8) protein is Large ribosomal subunit protein uL14.